The primary structure comprises 148 residues: Small ribosomal subunit protein bS16 (148 aa).

Residues 107-148 (AAARAAAGAEDRPATTPKKAKKAASADGADAPAADAPTAAGQ) form a disordered region. A compositionally biased stretch (low complexity) spans 129–148 (AASADGADAPAADAPTAAGQ).

This sequence belongs to the bacterial ribosomal protein bS16 family.

The chain is Small ribosomal subunit protein bS16 from Frankia alni (strain DSM 45986 / CECT 9034 / ACN14a).